The sequence spans 425 residues: Serine--tRNA ligase (425 aa).

230–232 (TAE) is an L-serine binding site. 261–263 (RSE) contributes to the ATP binding site. Residue glutamate 284 participates in L-serine binding. 348 to 351 (EISS) is an ATP binding site. Serine 384 serves as a coordination point for L-serine.

It belongs to the class-II aminoacyl-tRNA synthetase family. Type-1 seryl-tRNA synthetase subfamily. As to quaternary structure, homodimer. The tRNA molecule binds across the dimer.

The protein localises to the cytoplasm. It catalyses the reaction tRNA(Ser) + L-serine + ATP = L-seryl-tRNA(Ser) + AMP + diphosphate + H(+). It carries out the reaction tRNA(Sec) + L-serine + ATP = L-seryl-tRNA(Sec) + AMP + diphosphate + H(+). Its pathway is aminoacyl-tRNA biosynthesis; selenocysteinyl-tRNA(Sec) biosynthesis; L-seryl-tRNA(Sec) from L-serine and tRNA(Sec): step 1/1. In terms of biological role, catalyzes the attachment of serine to tRNA(Ser). Is also able to aminoacylate tRNA(Sec) with serine, to form the misacylated tRNA L-seryl-tRNA(Sec), which will be further converted into selenocysteinyl-tRNA(Sec). This chain is Serine--tRNA ligase, found in Streptococcus pyogenes serotype M28 (strain MGAS6180).